Reading from the N-terminus, the 136-residue chain is 5-hydroxyisourate hydrolase (136 aa).

A signal peptide spans Met-1–Ala-20. 3 residues coordinate substrate: His-31, Arg-69, and Tyr-133.

It belongs to the transthyretin family. 5-hydroxyisourate hydrolase subfamily. As to quaternary structure, homotetramer.

The protein localises to the periplasm. The enzyme catalyses 5-hydroxyisourate + H2O = 5-hydroxy-2-oxo-4-ureido-2,5-dihydro-1H-imidazole-5-carboxylate + H(+). Catalyzes the hydrolysis of 5-hydroxyisourate (HIU) to 2-oxo-4-hydroxy-4-carboxy-5-ureidoimidazoline (OHCU). The sequence is that of 5-hydroxyisourate hydrolase (hiuH) from Salmonella typhi.